Here is a 130-residue protein sequence, read N- to C-terminus: Small ribosomal subunit protein uS9 (130 aa).

Belongs to the universal ribosomal protein uS9 family.

The chain is Small ribosomal subunit protein uS9 from Buchnera aphidicola subsp. Acyrthosiphon pisum (strain 5A).